The chain runs to 778 residues: Exo-beta-D-glucosaminidase (778 aa).

Substrate contacts are provided by residues Tyr-55, 104–105, 180–181, Glu-308, Glu-349, and Tyr-381; these read GE and DE. Glu-181 acts as the Proton donor in catalysis. Catalysis depends on Glu-349, which acts as the Nucleophile.

This sequence belongs to the glycosyl hydrolase 35 family. Homodimer.

It localises to the cytoplasm. It carries out the reaction beta-D-glucosaminyl-(1-&gt;4)-N-acetyl-D-glucosamine + H2O = D-glucosamine + N-acetyl-D-glucosamine. The protein operates within glycan degradation; chitin degradation. Exo-type enzyme that specifically cleaves the non-reducing terminal glycosidic bond of chitooligosaccharides. Catalyzes the hydrolysis of GlcN-GlcNAc to glucosamine (GlcN) and N-acetylglucosamine (GlcNAc). Involved in chitin degradation. Can also hydrolyze chitosan and chitooligosaccharides of various chain lengths. In Pyrococcus horikoshii (strain ATCC 700860 / DSM 12428 / JCM 9974 / NBRC 100139 / OT-3), this protein is Exo-beta-D-glucosaminidase.